The chain runs to 99 residues: DNA-directed RNA polymerase subunit omega (99 aa).

Positions 1 to 10 (MSSTSAASAA) are enriched in low complexity. A disordered region spans residues 1–20 (MSSTSAASAAGQGALPAYDT).

Belongs to the RNA polymerase subunit omega family. The RNAP catalytic core consists of 2 alpha, 1 beta, 1 beta' and 1 omega subunit. When a sigma factor is associated with the core the holoenzyme is formed, which can initiate transcription.

It carries out the reaction RNA(n) + a ribonucleoside 5'-triphosphate = RNA(n+1) + diphosphate. Promotes RNA polymerase assembly. Latches the N- and C-terminal regions of the beta' subunit thereby facilitating its interaction with the beta and alpha subunits. The protein is DNA-directed RNA polymerase subunit omega of Rhodococcus erythropolis (strain PR4 / NBRC 100887).